Here is a 338-residue protein sequence, read N- to C-terminus: Nucleoid-associated protein VSAL_I1059 (338 aa).

Residues 319 to 338 (KGTPPNLKDQLTRRLGSSES) form a disordered region.

It belongs to the YejK family.

Its subcellular location is the cytoplasm. The protein resides in the nucleoid. The polypeptide is Nucleoid-associated protein VSAL_I1059 (Aliivibrio salmonicida (strain LFI1238) (Vibrio salmonicida (strain LFI1238))).